Consider the following 267-residue polypeptide: 5'-nucleotidase SurE (267 aa).

Residues aspartate 14, aspartate 15, serine 45, and asparagine 100 each coordinate a divalent metal cation.

It belongs to the SurE nucleotidase family. A divalent metal cation serves as cofactor.

Its subcellular location is the cytoplasm. It catalyses the reaction a ribonucleoside 5'-phosphate + H2O = a ribonucleoside + phosphate. In terms of biological role, nucleotidase that shows phosphatase activity on nucleoside 5'-monophosphates. The protein is 5'-nucleotidase SurE of Methanosarcina mazei (strain ATCC BAA-159 / DSM 3647 / Goe1 / Go1 / JCM 11833 / OCM 88) (Methanosarcina frisia).